The chain runs to 132 residues: Translation initiation factor 5A (132 aa).

K36 carries the hypusine modification.

Belongs to the eIF-5A family.

The protein resides in the cytoplasm. In terms of biological role, functions by promoting the formation of the first peptide bond. The protein is Translation initiation factor 5A (eIF5A) of Caldivirga maquilingensis (strain ATCC 700844 / DSM 13496 / JCM 10307 / IC-167).